We begin with the raw amino-acid sequence, 374 residues long: Ribosomal RNA large subunit methyltransferase G (374 aa).

The protein belongs to the methyltransferase superfamily. RlmG family.

The protein localises to the cytoplasm. The catalysed reaction is guanosine(1835) in 23S rRNA + S-adenosyl-L-methionine = N(2)-methylguanosine(1835) in 23S rRNA + S-adenosyl-L-homocysteine + H(+). In terms of biological role, specifically methylates the guanine in position 1835 (m2G1835) of 23S rRNA. In Pseudomonas putida (strain GB-1), this protein is Ribosomal RNA large subunit methyltransferase G.